The chain runs to 359 residues: Glycogen synthase kinase-3 (359 aa).

The Protein kinase domain occupies 36-320 (YYDQKVIGNG…PQAACQHAFF (285 aa)). ATP is bound by residues 42 to 50 (IGNGSFGVV) and Lys65. The active-site Proton acceptor is the Asp161. A disordered region spans residues 330 to 359 (LPSGRALPQLEMDGPNEVSATGGDMAGPSA).

Belongs to the protein kinase superfamily. CMGC Ser/Thr protein kinase family. GSK-3 subfamily. As to quaternary structure, monomer. Interacts with axl-1.

It carries out the reaction L-seryl-[tau protein] + ATP = O-phospho-L-seryl-[tau protein] + ADP + H(+). It catalyses the reaction L-threonyl-[tau protein] + ATP = O-phospho-L-threonyl-[tau protein] + ADP + H(+). In terms of biological role, phosphorylates oma-1, a regulator of the oocyte-to-embryo transition, enabling its degradation. Phosphorylates skn-1, preventing it from accumulating in nuclei and thus inhibiting phase II gene expression in the oxidative stress defense. Involved in mesendoderm specification and mitotic spindle orientation in EMS blastomeres. Thought to be a branch point in these processes as proteins downstream are not required. Negatively regulates Wnt signaling in vulval precursor cells and acts as a Wnt-independent repressor of med-1 and med-2 in the C lineage inhibiting mesoderm development. Required for normal lifespan and LiCl-induced lifespan extension. In Caenorhabditis briggsae, this protein is Glycogen synthase kinase-3 (gsk-3).